Reading from the N-terminus, the 241-residue chain is Triosephosphate isomerase (241 aa).

9–11 (NWK) lines the substrate pocket. The active-site Electrophile is His96. The active-site Proton acceptor is the Glu165. Substrate contacts are provided by residues Gly171, Ser204, and 225–226 (GG).

The protein belongs to the triosephosphate isomerase family. In terms of assembly, homodimer.

It is found in the cytoplasm. It carries out the reaction D-glyceraldehyde 3-phosphate = dihydroxyacetone phosphate. The protein operates within carbohydrate biosynthesis; gluconeogenesis. Its pathway is carbohydrate degradation; glycolysis; D-glyceraldehyde 3-phosphate from glycerone phosphate: step 1/1. Functionally, involved in the gluconeogenesis. Catalyzes stereospecifically the conversion of dihydroxyacetone phosphate (DHAP) to D-glyceraldehyde-3-phosphate (G3P). The polypeptide is Triosephosphate isomerase (Prochlorococcus marinus subsp. pastoris (strain CCMP1986 / NIES-2087 / MED4)).